The sequence spans 255 residues: Triosephosphate isomerase (255 aa).

Position 15 to 17 (15 to 17) interacts with substrate; sequence NWK. Histidine 100 functions as the Electrophile in the catalytic mechanism. Glutamate 172 acts as the Proton acceptor in catalysis. Residues glycine 178, serine 218, and 239-240 contribute to the substrate site; that span reads GG.

Belongs to the triosephosphate isomerase family. Homodimer.

The protein resides in the cytoplasm. The catalysed reaction is D-glyceraldehyde 3-phosphate = dihydroxyacetone phosphate. It functions in the pathway carbohydrate biosynthesis; gluconeogenesis. It participates in carbohydrate degradation; glycolysis; D-glyceraldehyde 3-phosphate from glycerone phosphate: step 1/1. Involved in the gluconeogenesis. Catalyzes stereospecifically the conversion of dihydroxyacetone phosphate (DHAP) to D-glyceraldehyde-3-phosphate (G3P). In Clostridium tetani (strain Massachusetts / E88), this protein is Triosephosphate isomerase.